The following is a 364-amino-acid chain: F-box/kelch-repeat protein At3g23880 (364 aa).

In terms of domain architecture, F-box spans 8–54 (MFSPHNLPLEMMEEILLRLPVKSLTRFKCVCSSWRSLISETLFALKH). 2 Kelch repeats span residues 169–215 (DYKV…SRSG) and 216–265 (IYIN…TLGD).

In Arabidopsis thaliana (Mouse-ear cress), this protein is F-box/kelch-repeat protein At3g23880.